Consider the following 85-residue polypeptide: UPF0181 protein YPO1774/y2534/YP_1619 (85 aa).

A disordered region spans residues 50-85 (QAMAIFEDHDFDEHTESDYRRDDEPDADDIEDPYEG). The segment covering 55–72 (FEDHDFDEHTESDYRRDD) has biased composition (basic and acidic residues). Acidic residues predominate over residues 73–85 (EPDADDIEDPYEG).

This sequence belongs to the UPF0181 family.

This chain is UPF0181 protein YPO1774/y2534/YP_1619, found in Yersinia pestis.